A 416-amino-acid polypeptide reads, in one-letter code: 2-aminoadipate transaminase (416 aa).

Pyridoxal 5'-phosphate is bound by residues 102–103 and Gln233; that span reads GA. Lys259 is subject to N6-(pyridoxal phosphate)lysine. Residue Thr288 coordinates pyridoxal 5'-phosphate.

Belongs to the class-III pyridoxal-phosphate-dependent aminotransferase family. Requires pyridoxal 5'-phosphate as cofactor.

The catalysed reaction is L-2-aminoadipate + 2-oxoglutarate = 2-oxoadipate + L-glutamate. It carries out the reaction 5-aminopentanoate + 2-oxoglutarate = 5-oxopentanoate + L-glutamate. It participates in amino-acid degradation. Its function is as follows. Catalyzes the conversion of 2-aminoadipate (2AA) to 2-oxoadipate (2OA). Is most active on L-2-aminoadipate (L-2AA) and shows only weak activity on the enantiomer, D-2-aminoadipate (D-2AA). Shows moderate activity on 5-aminovalerate (5AVA) and weak activity toward 4-aminobutyrate (GABA). Is involved in a D-lysine catabolic pathway. The protein is 2-aminoadipate transaminase of Pseudomonas putida (strain ATCC 47054 / DSM 6125 / CFBP 8728 / NCIMB 11950 / KT2440).